A 42-amino-acid chain; its full sequence is Cytochrome b559 subunit beta (42 aa).

A helical transmembrane segment spans residues 17-33 (WLAIHGLAVPTVFFLGA). His-21 is a heme binding site.

It belongs to the PsbE/PsbF family. As to quaternary structure, heterodimer of an alpha subunit and a beta subunit. PSII is composed of 1 copy each of membrane proteins PsbA, PsbB, PsbC, PsbD, PsbE, PsbF, PsbH, PsbI, PsbJ, PsbK, PsbL, PsbM, PsbT, PsbX, PsbY, PsbZ, Psb30/Ycf12, at least 3 peripheral proteins of the oxygen-evolving complex and a large number of cofactors. It forms dimeric complexes. The cofactor is heme b.

The protein localises to the plastid. Its subcellular location is the chloroplast thylakoid membrane. This b-type cytochrome is tightly associated with the reaction center of photosystem II (PSII). PSII is a light-driven water:plastoquinone oxidoreductase that uses light energy to abstract electrons from H(2)O, generating O(2) and a proton gradient subsequently used for ATP formation. It consists of a core antenna complex that captures photons, and an electron transfer chain that converts photonic excitation into a charge separation. In Guillardia theta (Cryptophyte), this protein is Cytochrome b559 subunit beta.